The chain runs to 66 residues: Moricin-2 (66 aa).

Residues 1 to 24 (MNILKLFFVFIVAMSLVSCSTAAP) form the signal peptide.

Expressed in fat body and to a lesser extent in hemocyte and Malpighian tubules.

It localises to the secreted. Has antibacterial activity against Gram-positive and Gram-negative bacteria. Probably acts by disturbing membrane functions with its amphipathic structure. This is Moricin-2 (MOR2) from Bombyx mori (Silk moth).